The chain runs to 156 residues: Cyanate hydratase (156 aa).

Catalysis depends on residues Arg96, Glu99, and Ser122.

This sequence belongs to the cyanase family.

It catalyses the reaction cyanate + hydrogencarbonate + 3 H(+) = NH4(+) + 2 CO2. Its function is as follows. Catalyzes the reaction of cyanate with bicarbonate to produce ammonia and carbon dioxide. The chain is Cyanate hydratase from Pseudomonas aeruginosa (strain LESB58).